The following is a 219-amino-acid chain: Charged multivesicular body protein 5 (219 aa).

Positions 22 to 153 (TNVDGRAESI…EIQEALSRSY (132 aa)) form a coiled coil.

Belongs to the SNF7 family. As to quaternary structure, probable peripherally associated component of the endosomal sorting required for transport complex III (ESCRT-III).

It localises to the cytoplasm. The protein localises to the cytosol. Its subcellular location is the endosome membrane. Its function is as follows. Probable peripherally associated component of the endosomal sorting required for transport complex III (ESCRT-III) which is involved in multivesicular bodies (MVBs) formation and sorting of endosomal cargo proteins into MVBs. MVBs contain intraluminal vesicles (ILVs) that are generated by invagination and scission from the limiting membrane of the endosome and mostly are delivered to lysosomes enabling degradation of membrane proteins, such as stimulated growth factor receptors, lysosomal enzymes and lipids. The polypeptide is Charged multivesicular body protein 5 (chmp5) (Xenopus laevis (African clawed frog)).